The primary structure comprises 346 residues: Phosphoribosylformylglycinamidine cyclo-ligase (346 aa).

Belongs to the AIR synthase family.

It is found in the cytoplasm. It catalyses the reaction 2-formamido-N(1)-(5-O-phospho-beta-D-ribosyl)acetamidine + ATP = 5-amino-1-(5-phospho-beta-D-ribosyl)imidazole + ADP + phosphate + H(+). The protein operates within purine metabolism; IMP biosynthesis via de novo pathway; 5-amino-1-(5-phospho-D-ribosyl)imidazole from N(2)-formyl-N(1)-(5-phospho-D-ribosyl)glycinamide: step 2/2. The sequence is that of Phosphoribosylformylglycinamidine cyclo-ligase from Bacillus cereus (strain ZK / E33L).